Consider the following 273-residue polypeptide: Homeobox protein Nkx-2.2 (273 aa).

Disordered regions lie at residues 1–56 (MSLT…LDAV) and 91–131 (AASA…KRKR). Residues 20–38 (DTNDEEGSVAEGPEEESEG) show a composition bias toward acidic residues. The segment at residues 128-187 (KRKRRVLFSKAQTYELERRFRQQRYLSAPEREHLASLIRLTPTQVKIWFQNHRYKMKRAR) is a DNA-binding region (homeobox).

Belongs to the NK-2 homeobox family. Interacts with OLIG2.

It localises to the nucleus. Transcriptional activator involved in the development of insulin-producting beta cells in the endocrine pancreas. May also be involved in specifying diencephalic neuromeric boundaries, and in controlling the expression of genes that play a role in axonal guidance. Binds to elements within the NEUROD1 promoter. The protein is Homeobox protein Nkx-2.2 (NKX2-2) of Mesocricetus auratus (Golden hamster).